Reading from the N-terminus, the 303-residue chain is Bifunctional protein FolD (303 aa).

NADP(+) is bound by residues 165–167 (GRS), serine 190, and isoleucine 231.

It belongs to the tetrahydrofolate dehydrogenase/cyclohydrolase family. In terms of assembly, homodimer.

The catalysed reaction is (6R)-5,10-methylene-5,6,7,8-tetrahydrofolate + NADP(+) = (6R)-5,10-methenyltetrahydrofolate + NADPH. It carries out the reaction (6R)-5,10-methenyltetrahydrofolate + H2O = (6R)-10-formyltetrahydrofolate + H(+). It participates in one-carbon metabolism; tetrahydrofolate interconversion. Functionally, catalyzes the oxidation of 5,10-methylenetetrahydrofolate to 5,10-methenyltetrahydrofolate and then the hydrolysis of 5,10-methenyltetrahydrofolate to 10-formyltetrahydrofolate. This chain is Bifunctional protein FolD, found in Prochlorococcus marinus (strain NATL1A).